The following is a 600-amino-acid chain: Elongation factor 4 (600 aa).

A tr-type G domain is found at 5 to 187; it reads KYIRNFSIIA…AIVSKLPPPK (183 aa). GTP contacts are provided by residues 17 to 22 and 134 to 137; these read DHGKST and NKLD.

It belongs to the TRAFAC class translation factor GTPase superfamily. Classic translation factor GTPase family. LepA subfamily.

The protein localises to the cell inner membrane. It carries out the reaction GTP + H2O = GDP + phosphate + H(+). Functionally, required for accurate and efficient protein synthesis under certain stress conditions. May act as a fidelity factor of the translation reaction, by catalyzing a one-codon backward translocation of tRNAs on improperly translocated ribosomes. Back-translocation proceeds from a post-translocation (POST) complex to a pre-translocation (PRE) complex, thus giving elongation factor G a second chance to translocate the tRNAs correctly. Binds to ribosomes in a GTP-dependent manner. The sequence is that of Elongation factor 4 from Rickettsia rickettsii (strain Iowa).